The chain runs to 443 residues: Exodeoxyribonuclease 7 large subunit (443 aa).

It belongs to the XseA family. As to quaternary structure, heterooligomer composed of large and small subunits.

It localises to the cytoplasm. It catalyses the reaction Exonucleolytic cleavage in either 5'- to 3'- or 3'- to 5'-direction to yield nucleoside 5'-phosphates.. Bidirectionally degrades single-stranded DNA into large acid-insoluble oligonucleotides, which are then degraded further into small acid-soluble oligonucleotides. The sequence is that of Exodeoxyribonuclease 7 large subunit from Vibrio campbellii (strain ATCC BAA-1116).